The primary structure comprises 282 residues: MDPSSSSRARSMPPPVPMEGLQEAGPSPFLTKTFEMVGDPNTNHIVSWNRGGISFVVWDPHSFSATILPLYFKHNNFSSFVRQLNTYGFRKIEAERWEFMNEGFLMGQRDLLKSIKRRTSSSSPPSLNYSQSQPEAHDPGVELPQLREERHVLMMEISTLRQEEQRARGYVQAMEQRINGAEKKQRHMMSFLRRAVENPSLLQQIFEQKRDREEAAMIDQAGLIKMEEVEHLSELEALALEMQGYGRQRTDGVERELDDGFWEELLMNNENSDEEEANVKQD.

Low complexity-rich tracts occupy residues 1 to 11 (MDPSSSSRARS) and 120 to 134 (SSSS…QSQP). Disordered regions lie at residues 1 to 24 (MDPS…LQEA) and 117 to 139 (RRTS…AHDP). The DNA-binding element occupies 26 to 120 (PSPFLTKTFE…LLKSIKRRTS (95 aa)). Positions 137-196 (HDPGVELPQLREERHVLMMEISTLRQEEQRARGYVQAMEQRINGAEKKQRHMMSFLRRAV) are hydrophobic repeat HR-A/B. A Nuclear localization signal motif is present at residues 208–212 (QKRDR). Residues 232–240 (LSELEALAL) carry the Nuclear export signal motif. The AHA motif lies at 259–268 (DGFWEELLMN).

It belongs to the HSF family. Class A subfamily. In terms of assembly, homotrimer. In terms of processing, exhibits temperature-dependent phosphorylation.

Its subcellular location is the cytoplasm. The protein resides in the nucleus. In terms of biological role, transcriptional activator that specifically binds DNA sequence 5'-AGAAnnTTCT-3' known as heat shock promoter elements (HSE). This Arabidopsis thaliana (Mouse-ear cress) protein is Heat stress transcription factor A-7b (HSFA7B).